The following is a 436-amino-acid chain: Protein translocase subunit SecY (436 aa).

10 consecutive transmembrane segments (helical) span residues 19–39 (ILFT…TVPG), 68–88 (FSVF…VQLL), 116–136 (YISL…FNAL), 151–171 (LFIG…GEQI), 179–199 (GVSM…VKGI), 216–236 (IIFV…TTYV), 269–289 (VIPV…LQFL), 313–333 (GIAM…FVQI), 372–392 (VGSL…DLFG), and 395–415 (DTVA…IEGM).

This sequence belongs to the SecY/SEC61-alpha family. Component of the Sec protein translocase complex. Heterotrimer consisting of SecY, SecE and SecG subunits. The heterotrimers can form oligomers, although 1 heterotrimer is thought to be able to translocate proteins. Interacts with the ribosome. Interacts with SecDF, and other proteins may be involved. Interacts with SecA.

The protein localises to the cell membrane. Functionally, the central subunit of the protein translocation channel SecYEG. Consists of two halves formed by TMs 1-5 and 6-10. These two domains form a lateral gate at the front which open onto the bilayer between TMs 2 and 7, and are clamped together by SecE at the back. The channel is closed by both a pore ring composed of hydrophobic SecY resides and a short helix (helix 2A) on the extracellular side of the membrane which forms a plug. The plug probably moves laterally to allow the channel to open. The ring and the pore may move independently. This is Protein translocase subunit SecY from Streptococcus gordonii (strain Challis / ATCC 35105 / BCRC 15272 / CH1 / DL1 / V288).